Consider the following 117-residue polypeptide: DNA-directed RNA polymerase subunit omega (117 aa).

It belongs to the RNA polymerase subunit omega family. In terms of assembly, the RNAP catalytic core consists of 2 alpha, 1 beta, 1 beta' and 1 omega subunit. When a sigma factor is associated with the core the holoenzyme is formed, which can initiate transcription.

It catalyses the reaction RNA(n) + a ribonucleoside 5'-triphosphate = RNA(n+1) + diphosphate. In terms of biological role, promotes RNA polymerase assembly. Latches the N- and C-terminal regions of the beta' subunit thereby facilitating its interaction with the beta and alpha subunits. This is DNA-directed RNA polymerase subunit omega from Ruegeria sp. (strain TM1040) (Silicibacter sp.).